Here is a 697-residue protein sequence, read N- to C-terminus: T-related protein (697 aa).

Positions 1 to 60 (MTTSHILSAVDPTTGLSGNVSGGGGGGGAGGGAGSGSPQHVTHNGHGHGHGLGGVAAVSG) are disordered. 2 stretches are compositionally biased toward gly residues: residues 20 to 35 (VSGG…GAGS) and 50 to 60 (HGLGGVAAVSG). Positions 96–264 (LWLRFQNLTN…YNPFAKAFLD (169 aa)) form a DNA-binding region, T-box. Low complexity predominate over residues 316–330 (SVSSAESVGPSSGGS). 2 disordered regions span residues 316–407 (SVSS…GGIG) and 462–488 (VCSG…TSSP). Residues 337-351 (SLSSRSVAPTRTTPY) are compositionally biased toward polar residues. Low complexity-rich tracts occupy residues 352–373 (SRPR…SSTS), 381–401 (QTPT…VSSS), and 469–488 (SSHN…TSSP).

It localises to the nucleus. Functionally, required for the specification of the hindgut and anal pads. This chain is T-related protein (byn), found in Drosophila melanogaster (Fruit fly).